We begin with the raw amino-acid sequence, 134 residues long: Small ribosomal subunit protein uS11 (134 aa).

It belongs to the universal ribosomal protein uS11 family. In terms of assembly, part of the 30S ribosomal subunit. Interacts with proteins S7 and S18. Binds to IF-3.

In terms of biological role, located on the platform of the 30S subunit, it bridges several disparate RNA helices of the 16S rRNA. Forms part of the Shine-Dalgarno cleft in the 70S ribosome. This chain is Small ribosomal subunit protein uS11, found in Parafrankia sp. (strain EAN1pec).